A 218-amino-acid polypeptide reads, in one-letter code: Protein-L-isoaspartate O-methyltransferase (218 aa).

The active site involves serine 63.

This sequence belongs to the methyltransferase superfamily. L-isoaspartyl/D-aspartyl protein methyltransferase family.

The protein resides in the cytoplasm. It catalyses the reaction [protein]-L-isoaspartate + S-adenosyl-L-methionine = [protein]-L-isoaspartate alpha-methyl ester + S-adenosyl-L-homocysteine. Its function is as follows. Catalyzes the methyl esterification of L-isoaspartyl residues in peptides and proteins that result from spontaneous decomposition of normal L-aspartyl and L-asparaginyl residues. It plays a role in the repair and/or degradation of damaged proteins. This chain is Protein-L-isoaspartate O-methyltransferase, found in Syntrophus aciditrophicus (strain SB).